The following is a 984-amino-acid chain: Glutamate [NMDA] receptor subunit 1 (984 aa).

The N-terminal stretch at 1–24 (MAAAFAYRWLLCAAGIVNVLPIGA) is a signal peptide. The Extracellular portion of the chain corresponds to 25 to 570 (QRHTASDNPS…TLVSFLQPFS (546 aa)). N-linked (GlcNAc...) asparagine glycosylation is found at Asn255, Asn311, Asn342, Asn394, Asn451, Asn478, and Asn498. Glycine is bound by residues 527–529 (PLT) and Arg534. The helical transmembrane segment at 571 to 591 (NTLWILVMVSVHVVALVLYLL) threads the bilayer. Over 592–648 (DRFSPFGRFKLSHSDSNEEKALNLSSAVWFAWGVLLNSGIGEGTPRSFSARVLGMVW) the chain is Cytoplasmic. Residues 649–669 (AGFAMIIVASYTANLAAFLVL) form a helical membrane-spanning segment. At 670–828 (ERPKTKLSGI…KTPNTLGLKN (159 aa)) the chain is on the extracellular side. The N-linked (GlcNAc...) asparagine glycan is linked to Asn690. Glycine is bound by residues Ser700 and Asp744. Residues 829 to 849 (MAGVFILVGVGIAGGVGLIII) traverse the membrane as a helical segment. The Cytoplasmic portion of the chain corresponds to 850 to 984 (EVIYKKHQVK…YTSDVSHLVV (135 aa)). Positions 947–984 (KSGLVPPALGLGKTRPQQNPLPPRYSPGYTSDVSHLVV) are disordered. The span at 974 to 984 (GYTSDVSHLVV) shows a compositional bias: polar residues.

Belongs to the glutamate-gated ion channel (TC 1.A.10.1) family. In terms of assembly, forms a heteromeric NMDA channel with Nmdar2.

The protein resides in the cell membrane. It localises to the postsynaptic cell membrane. It is found in the postsynaptic density. Functionally, NMDA receptor subtype of glutamate-gated ion channels with high calcium permeability and voltage-dependent sensitivity to magnesium. Mediated by glycine. This protein plays a key role in synaptic plasticity, synaptogenesis, excitotoxicity, memory acquisition and learning. It mediates neuronal functions in glutamate neurotransmission. Is involved in the cell surface targeting of NMDA receptors. Plays a role in associative learning and in long-term memory consolidation. This chain is Glutamate [NMDA] receptor subunit 1, found in Drosophila virilis (Fruit fly).